We begin with the raw amino-acid sequence, 201 residues long: Pyridoxal 5'-phosphate synthase subunit PdxT (201 aa).

Position 50 to 52 (50 to 52 (GES)) interacts with L-glutamine. Cys82 functions as the Nucleophile in the catalytic mechanism. Residues Arg111 and 139-140 (IR) contribute to the L-glutamine site. Active-site charge relay system residues include His180 and Glu182.

This sequence belongs to the glutaminase PdxT/SNO family. As to quaternary structure, in the presence of PdxS, forms a dodecamer of heterodimers. Only shows activity in the heterodimer.

The enzyme catalyses aldehydo-D-ribose 5-phosphate + D-glyceraldehyde 3-phosphate + L-glutamine = pyridoxal 5'-phosphate + L-glutamate + phosphate + 3 H2O + H(+). It carries out the reaction L-glutamine + H2O = L-glutamate + NH4(+). Its pathway is cofactor biosynthesis; pyridoxal 5'-phosphate biosynthesis. In terms of biological role, catalyzes the hydrolysis of glutamine to glutamate and ammonia as part of the biosynthesis of pyridoxal 5'-phosphate. The resulting ammonia molecule is channeled to the active site of PdxS. This Nocardioides sp. (strain ATCC BAA-499 / JS614) protein is Pyridoxal 5'-phosphate synthase subunit PdxT.